A 59-amino-acid chain; its full sequence is Large ribosomal subunit protein bL32 (59 aa).

The tract at residues 1-59 (MAVQQNKKSPSKRGMHRSHDFLTTSPLAVEPSTGEVHLRHHISPNGYYRGKKVVKTKND) is disordered. Basic residues predominate over residues 49-59 (RGKKVVKTKND).

The protein belongs to the bacterial ribosomal protein bL32 family.

This is Large ribosomal subunit protein bL32 from Burkholderia mallei (strain NCTC 10247).